The following is a 437-amino-acid chain: Pyrophosphate--fructose 6-phosphate 1-phosphotransferase (437 aa).

Gly-27 is a binding site for diphosphate. Residue Asp-122 participates in Mg(2+) binding. Substrate contacts are provided by residues Thr-147–Asp-149, Met-193–Arg-195, Glu-261, and Tyr-323–Arg-326. Catalysis depends on Asp-149, which acts as the Proton acceptor.

This sequence belongs to the phosphofructokinase type A (PFKA) family. PPi-dependent PFK group II subfamily. Clade 'Short' sub-subfamily. In terms of assembly, homotetramer. The cofactor is Mg(2+). Mn(2+) is required as a cofactor.

The protein resides in the cytoplasm. The enzyme catalyses beta-D-fructose 6-phosphate + diphosphate = beta-D-fructose 1,6-bisphosphate + phosphate + H(+). The protein operates within carbohydrate degradation; glycolysis; D-glyceraldehyde 3-phosphate and glycerone phosphate from D-glucose: step 3/4. Its activity is regulated as follows. Activated by AMP. Probably promotes oligomerization of the enzyme. In terms of biological role, catalyzes the phosphorylation of D-fructose 6-phosphate, the first committing step of glycolysis. Uses inorganic phosphate (PPi) as phosphoryl donor instead of ATP like common ATP-dependent phosphofructokinases (ATP-PFKs), which renders the reaction reversible, and can thus function both in glycolysis and gluconeogenesis. Consistently, PPi-PFK can replace the enzymes of both the forward (ATP-PFK) and reverse (fructose-bisphosphatase (FBPase)) reactions. The polypeptide is Pyrophosphate--fructose 6-phosphate 1-phosphotransferase (Naegleria fowleri (Brain eating amoeba)).